Reading from the N-terminus, the 165-residue chain is Putative protein FAM86C2P (165 aa).

Belongs to the class I-like SAM-binding methyltransferase superfamily. EEF2KMT family.

In Homo sapiens (Human), this protein is Putative protein FAM86C2P (FAM86C2P).